A 277-amino-acid polypeptide reads, in one-letter code: Undecaprenyl-diphosphatase (277 aa).

7 helical membrane-spanning segments follow: residues 3–23 (IALL…EFLP), 44–64 (AKVF…LVYW), 82–102 (QFAL…LLFG), 109–129 (LFTP…ILWA), 189–209 (TDFS…YSLF), 218–238 (ADAP…WLCI), and 253–273 (FAWY…SGVV).

Belongs to the UppP family.

The protein localises to the cell inner membrane. It carries out the reaction di-trans,octa-cis-undecaprenyl diphosphate + H2O = di-trans,octa-cis-undecaprenyl phosphate + phosphate + H(+). Functionally, catalyzes the dephosphorylation of undecaprenyl diphosphate (UPP). Confers resistance to bacitracin. The sequence is that of Undecaprenyl-diphosphatase from Polaromonas naphthalenivorans (strain CJ2).